Consider the following 519-residue polypeptide: Laccase-2 (519 aa).

An N-terminal signal peptide occupies residues 1–20 (MGLQRFSFFVTLALVARSLA). 2 consecutive Plastocyanin-like domains span residues 22-147 (IGPV…FVVY) and 159-301 (VDNE…ILRY). The N-linked (GlcNAc...) asparagine glycan is linked to Asn-74. Cu cation contacts are provided by His-84, His-86, His-129, and His-131. Disulfide bonds link Cys-105–Cys-508 and Cys-137–Cys-225. Asn-161, Asn-228, Asn-237, Asn-271, Asn-353, and Asn-361 each carry an N-linked (GlcNAc...) asparagine glycan. The Plastocyanin-like 3 domain occupies 368-490 (TVPVLLQILS…AGFAIVFAED (123 aa)). Positions 415, 418, and 420 each coordinate Cu cation. Asn-456 carries N-linked (GlcNAc...) asparagine glycosylation. Positions 472, 473, 474, and 478 each coordinate Cu cation.

The protein belongs to the multicopper oxidase family. It depends on Cu cation as a cofactor.

It is found in the secreted. The enzyme catalyses 4 hydroquinone + O2 = 4 benzosemiquinone + 2 H2O. Its function is as follows. Lignin degradation and detoxification of lignin-derived products. This chain is Laccase-2 (LCC2), found in Trametes versicolor (White-rot fungus).